The primary structure comprises 46 residues: MMQFILGFTLGNVVGMYLAQNYEVPNISKKIEAFKKDVEAKKKPPE.

Residues 7–23 (GFTLGNVVGMYLAQNYE) traverse the membrane as a helical segment.

It belongs to the STMP1 family. Widely expressed. Expressed more abundantly in brain compared with other tissues such as heart, muscle and liver.

Its subcellular location is the mitochondrion inner membrane. It is found in the mitochondrion outer membrane. The protein localises to the mitochondrion intermembrane space. Its function is as follows. Microprotein involved in mitochondrial respiratory chain complex III (ubiquinol-cytochrome c oxidoreductase) and complex IV (mitochondrial cytochrome c oxidase complex) assembly. Required for the formation of mitochondrial supercomplexes (SCs). Also required for the activation of the NLRP3 inflammasome. In Danio rerio (Zebrafish), this protein is Short transmembrane mitochondrial protein 1.